The primary structure comprises 324 residues: NAC domain-containing protein 30 (324 aa).

Residues 9–158 form the NAC domain; sequence MPPGFRFHPT…GWVVCRAFRK (150 aa). The DNA-binding element occupies 109 to 164; sequence IGMRKTLVYYKGRAPNGRKSDWIMHEYRLQNSELAPVQEEGWVVCRAFRKPIPNQR. Positions 232-244 are enriched in low complexity; the sequence is LPQLDSPSLSPSL. The tract at residues 232–259 is disordered; the sequence is LPQLDSPSLSPSLGTNKDQNESFEQEEE.

This sequence belongs to the plant vascular related NAC-domain protein family. In terms of assembly, forms homodimer and heterodimers with other VND proteins (e.g. NAC037/VND1, NAC076/VND2 and NAC105/VND3) via their N-termini. Interacts with NAC083/VNI2. Expressed in developing protoxylems in roots and shoots. Detected in root protoxylem poles and in vessels of protoxylems, outermost metaxylems, inner metaxylems, shoots and hypocotyls. Expressed in roots, hypocotyls, cotyledons and leaves. Accumulates in the xylem but not in interfascicular fibers or pith cells in inflorescence stems. Present in developing vessels of the secondary xylem in roots undergoing secondary growth.

The protein localises to the nucleus. Transcription activator that binds to the secondary wall NAC binding element (SNBE), 5'-(T/A)NN(C/T)(T/C/G)TNNNNNNNA(A/C)GN(A/C/T)(A/T)-3', in the promoter of target genes (e.g. genes involved in secondary wall biosynthesis, cell wall modification such as xylan accumulation, and programmed cell death). Involved in xylem formation in roots and shoots, especially regulating protoxylem vessel differentiation by promoting immature xylem vessel-specific genes expression. Can activate the expression of several genes including XCP1, MYB46, NAC010/SND3, MYB103, MYB58, MYB63, MYB83, KNAT7, ASL19 and ASL20. Functionally, required for the soilborne fungal pathogen Verticillium longisporum-induced transdifferentiation of chloroplast-containing bundle sheath cells to functional xylem elements leading to stunted growth, vein clearing, and leaf chloroses, as well as xylem hyperplasia within the vasculature of leaves, hypocotyls, and roots due to reinitiation of cambial activity and transdifferentiation of xylem parenchyma cells. This developmental reprogramming also mediates an increased drought stress tolerance. The chain is NAC domain-containing protein 30 from Arabidopsis thaliana (Mouse-ear cress).